Consider the following 800-residue polypeptide: Nucleolar complex protein 3 homolog (800 aa).

2 disordered regions span residues 27–93 (KLKN…DMMD) and 160–187 (GIIPQTREKPVTDSNKDEEDQEEERELE). A compositionally biased stretch (basic residues) spans 40–51 (KKYRKEQRKLRQ). Over residues 66-78 (NPKEKRPGKRIER) the composition is skewed to basic and acidic residues. The span at 79-93 (EEEEEEEALPLDMMD) shows a compositional bias: acidic residues. The segment covering 160 to 174 (GIIPQTREKPVTDSN) has biased composition (basic and acidic residues). Positions 175–187 (KDEEDQEEERELE) are enriched in acidic residues. Residue Lys-333 forms a Glycyl lysine isopeptide (Lys-Gly) (interchain with G-Cter in SUMO2) linkage. The stretch at 451–490 (KEKRKSLSRMQRKWKKAEEKLERELREAEASESTEKKLKL) forms a coiled coil. The residue at position 787 (Ser-787) is a Phosphoserine.

Belongs to the CBF/MAK21 family. In terms of tissue distribution, expressed in colon, heart, kidney, liver, lung, placenta, skeletal muscle, small intestine, spleen and thymus.

Its subcellular location is the nucleus. The protein resides in the nucleolus. It localises to the nucleus speckle. May be required for adipogenesis. The sequence is that of Nucleolar complex protein 3 homolog (NOC3L) from Homo sapiens (Human).